The following is a 385-amino-acid chain: Glucans biosynthesis protein C (385 aa).

Helical transmembrane passes span 17–37 (AWLMLLGIPFHISLIYSSHTW), 60–80 (MQVFFVISGYFSYMLFLRYPL), 91–111 (VGIPMLTAIPLLTLPQFIMLQ), 137–157 (ISHLWFLLVLVVMTTLCVWIF), 173–193 (KFSMVKLSVIFLCLGIGYAVI), 212–232 (FIVMQTLFYLPFFILGALAFI), 239–259 (LFTTPSRGCTLAAALAFVAYL), 274–294 (TESVITMVLGLWMVNVVFSFG), 311–331 (ASLFIYLVHHPLTLFFGAYIT), and 338–358 (WLGFLCGLIFVVGIAIILYEI).

The protein belongs to the acyltransferase 3 family. OpgC subfamily.

The protein resides in the cell membrane. The protein operates within glycan metabolism; osmoregulated periplasmic glucan (OPG) biosynthesis. Functionally, necessary for the succinyl substitution of periplasmic glucans. Could catalyze the transfer of succinyl residues from the cytoplasmic side of the membrane to the nascent glucan backbones on the periplasmic side of the membrane. The sequence is that of Glucans biosynthesis protein C from Escherichia coli (strain SMS-3-5 / SECEC).